We begin with the raw amino-acid sequence, 196 residues long: Carnitine operon protein CaiE (196 aa).

A disordered region spans residues 173–196 (TQPLRQMEENRPRLQGTTDVTPKR). Polar residues predominate over residues 187 to 196 (QGTTDVTPKR).

This sequence belongs to the transferase hexapeptide repeat family.

It functions in the pathway amine and polyamine metabolism; carnitine metabolism. Its function is as follows. Overproduction of CaiE stimulates the activity of CaiB and CaiD. In Shigella dysenteriae serotype 1 (strain Sd197), this protein is Carnitine operon protein CaiE.